We begin with the raw amino-acid sequence, 458 residues long: Monomethylamine methyltransferase MtmB1 (458 aa).

Residue Pyl202 is a non-standard amino acid, pyrrolysine.

Belongs to the monomethylamine methyltransferase family. As to quaternary structure, dimer of homotrimers. Can form a complex with MtmC (MtmC1 or MtmC2).

The catalysed reaction is Co(I)-[methylamine-specific corrinoid protein] + methylamine + H(+) = methyl-Co(III)-[methylamine-specific corrinoid protein] + NH4(+). It participates in one-carbon metabolism; methanogenesis from methylamine. Its function is as follows. Catalyzes the transfer of the methyl group from monomethylamine to the corrinoid cofactor of MtmC (MtmC1 or MtmC2). The chain is Monomethylamine methyltransferase MtmB1 (mtmB1) from Methanosarcina barkeri.